We begin with the raw amino-acid sequence, 322 residues long: DNA repair and recombination protein RadA (322 aa).

An ATP-binding site is contributed by 105–112; that stretch reads GMFGSGKT.

The protein belongs to the eukaryotic RecA-like protein family.

Its function is as follows. Involved in DNA repair and in homologous recombination. Binds and assemble on single-stranded DNA to form a nucleoprotein filament. Hydrolyzes ATP in a ssDNA-dependent manner and promotes DNA strand exchange between homologous DNA molecules. This chain is DNA repair and recombination protein RadA, found in Methanococcus maripaludis (strain DSM 14266 / JCM 13030 / NBRC 101832 / S2 / LL).